A 377-amino-acid polypeptide reads, in one-letter code: QLLEAAVVKVPLKKFKSIRETMKEKGLLGEFLRTHKYDPAWKYHFGDLSVSYEPMAYMDAAYFGEISIGTPPQNFLVLFDTGSSNLWVPSVYCQSQACTSHSRFNPSESSTYSTNGQTFSLQYGSGSLTGFFGYDTLTVQSIQVPNQEFGLSENEPGTNFVYAQFDGIMGLAYPTLSVDGATTAMQGMVQEGALTSPIFSVYLSDQQGSSGGAVVFGGVDSSLYTGQIYWAPVTQELYWQIGIEEFLIGGQASGWCSEGCQAIVDTGTSLLTVPQQYMSALLQATGAQEDEYGQFLVNCNSIQNLPTLTFIINGVEFPLPPSSYILNNNGYCTVGVEPTYLSAQNSQPLWILGDVFLRSYYSVYDLSNNRVGFATAA.

The N-terminal stretch at 1-5 (QLLEA) is a signal peptide. 2 consecutive propeptides (activation peptide) follow at residues 6–31 (AVVKVPLKKFKSIRETMKEKGLLGEF) and 32–48 (LRTHKYDPAWKYHFGDL). Positions 62 to 374 (YFGEISIGTP…DLSNNRVGFA (313 aa)) constitute a Peptidase A1 domain. Residue Asp80 is part of the active site. Disulfide bonds link Cys93–Cys98 and Cys256–Cys260. Asp265 is an active-site residue. Cys299 and Cys332 are joined by a disulfide.

Belongs to the peptidase A1 family. In terms of processing, each pepsinogen is converted to corresponding pepsin at pH 2.0 in part as a result of the release of a 47 AA activation segment and in part as a result of stepwise proteolytic cleavage via an intermediate form(s).

The protein resides in the secreted. It catalyses the reaction More restricted specificity than pepsin A, but shows preferential cleavage at Tyr-|-Xaa bonds. High activity on hemoglobin.. In terms of biological role, hydrolyzes a variety of proteins. This chain is Gastricsin (PGC), found in Macaca fuscata fuscata (Japanese macaque).